The chain runs to 356 residues: PEP-dependent dihydroxyacetone kinase, dihydroxyacetone-binding subunit DhaK (356 aa).

Positions 7-352 (DVQDVLDEQL…WDAPVHTPAL (346 aa)) constitute a DhaK domain. Dihydroxyacetone is bound by residues 53–56 (GSGH), Lys-104, and Asp-109. Residue His-56 is the Proton acceptor of the active site. His-218 acts as the Tele-hemiaminal-histidine intermediate in catalysis.

In terms of assembly, homodimer. The dihydroxyacetone kinase complex is composed of a homodimer of DhaM, a homodimer of DhaK and the subunit DhaL. DhaL also forms a complex with DhaR.

It catalyses the reaction dihydroxyacetone + phosphoenolpyruvate = dihydroxyacetone phosphate + pyruvate. It functions in the pathway polyol metabolism; glycerol degradation. Inhibited by chloro-3-hydroxyacetone and D,L-glyceraldehyde. Its function is as follows. Dihydroxyacetone binding subunit of the dihydroxyacetone kinase, which is responsible for the phosphoenolpyruvate (PEP)-dependent phosphorylation of dihydroxyacetone via a phosphoryl group transfer from DhaL-ATP. Binds covalently dihydroxyacetone in hemiaminal linkage. DhaK also acts as corepressor of the transcription activator DhaR by binding to the sensor domain of DhaR. In the presence of dihydroxyacetone, DhaL-ADP displaces DhaK and stimulates DhaR activity. In the absence of dihydroxyacetone, DhaL-ADP is converted by the PTS to DhaL-ATP, which does not bind to DhaR. In Escherichia coli (strain K12), this protein is PEP-dependent dihydroxyacetone kinase, dihydroxyacetone-binding subunit DhaK.